A 190-amino-acid polypeptide reads, in one-letter code: Small ribosomal subunit protein mS23 (190 aa).

The residue at position 2 (alanine 2) is an N-acetylalanine. Lysine 83 is modified (N6-succinyllysine). Lysine 102 bears the N6-acetyllysine mark. Residues 137–190 form a disordered region; it reads KARTQQEGSQVSRKSESMGVESQTALEENPPLKEVPQAQHLESPGEESKGLSPP.

This sequence belongs to the mitochondrion-specific ribosomal protein mS23 family. In terms of assembly, component of the mitochondrial ribosome small subunit (28S) which comprises a 12S rRNA and about 30 distinct proteins.

The protein localises to the mitochondrion. This Bos taurus (Bovine) protein is Small ribosomal subunit protein mS23.